Reading from the N-terminus, the 489-residue chain is Ent-kaurenoic acid oxidase 2 (489 aa).

Residues 5–25 traverse the membrane as a helical segment; the sequence is GLILMWFPLIILGLFVLKWVL. C436 contributes to the heme binding site.

The protein belongs to the cytochrome P450 family. It depends on heme as a cofactor. Widely expressed. Highly expressed in influorescence stem, influorescence, and silique tissue. Weakly expressed in cauline and rosette leaves. Expressed at a weaker level in stem and influorescence than AtKAO1/CYP88A3.

It localises to the endoplasmic reticulum membrane. It catalyses the reaction ent-kaur-16-en-19-oate + 3 reduced [NADPH--hemoprotein reductase] + 3 O2 = gibberellin A12 + 3 oxidized [NADPH--hemoprotein reductase] + 4 H2O + 4 H(+). The catalysed reaction is ent-kaur-16-en-19-oate + reduced [NADPH--hemoprotein reductase] + O2 = ent-7alpha-hydroxykaur-16-en-19-oate + oxidized [NADPH--hemoprotein reductase] + H2O + H(+). It carries out the reaction ent-7alpha-hydroxykaur-16-en-19-oate + reduced [NADPH--hemoprotein reductase] + O2 = gibberellin A12 aldehyde + oxidized [NADPH--hemoprotein reductase] + 2 H2O + H(+). The enzyme catalyses gibberellin A12 aldehyde + reduced [NADPH--hemoprotein reductase] + O2 = gibberellin A12 + oxidized [NADPH--hemoprotein reductase] + H2O + 2 H(+). It participates in plant hormone biosynthesis; gibberellin biosynthesis. Its function is as follows. Catalyzes three successive oxidations of ent-kaurenoic acid giving gibberellin 12 (GA12), a key step in gibberellins (GAs) biosynthesis. GAs, which are involved many processes, including stem elongation, play a central role in plant development. This chain is Ent-kaurenoic acid oxidase 2, found in Arabidopsis thaliana (Mouse-ear cress).